Reading from the N-terminus, the 496-residue chain is uncharacterized protein (496 aa).

13 consecutive transmembrane segments (helical) span residues 5–25 (LTAL…GFLA), 45–65 (FGGL…YTFL), 77–97 (VAFF…FFLP), 127–147 (LVAI…LSGI), 161–181 (VKFV…FSGI), 193–213 (ILVW…HFNG), 239–259 (IPWF…WAHA), 278–298 (FLPL…IAFL), 325–345 (FAYA…AIGA), 374–394 (MVFV…TALV), 396–416 (LQLL…VSLF), 424–444 (ATVI…ITQS), and 450–470 (EGFW…PLFV).

Belongs to the sodium:solute symporter (SSF) (TC 2.A.21) family.

Its subcellular location is the cell membrane. This is an uncharacterized protein from Bacillus subtilis (strain 168).